The following is a 537-amino-acid chain: CTP synthase (537 aa).

The segment at 1–269 (MNQTKYIFVT…DKVALKKLDL (269 aa)) is amidoligase domain. CTP is bound at residue S15. S15 serves as a coordination point for UTP. 16-21 (SLGKGI) contributes to the ATP binding site. Residue Y56 coordinates L-glutamine. Residue D73 coordinates ATP. Mg(2+)-binding residues include D73 and E143. CTP-binding positions include 150-152 (DIE), 190-195 (KTKPTQ), and K226. UTP-binding positions include 190–195 (KTKPTQ) and K226. A Glutamine amidotransferase type-1 domain is found at 295–537 (SIGLVGKYVE…IAAAVKHKNK (243 aa)). An L-glutamine-binding site is contributed by G357. Residue C384 is the Nucleophile; for glutamine hydrolysis of the active site. Residues 385-388 (LGMQ), E408, and R465 each bind L-glutamine. Active-site residues include H510 and E512.

It belongs to the CTP synthase family. In terms of assembly, homotetramer.

The catalysed reaction is UTP + L-glutamine + ATP + H2O = CTP + L-glutamate + ADP + phosphate + 2 H(+). The enzyme catalyses L-glutamine + H2O = L-glutamate + NH4(+). It carries out the reaction UTP + NH4(+) + ATP = CTP + ADP + phosphate + 2 H(+). The protein operates within pyrimidine metabolism; CTP biosynthesis via de novo pathway; CTP from UDP: step 2/2. With respect to regulation, allosterically activated by GTP, when glutamine is the substrate; GTP has no effect on the reaction when ammonia is the substrate. The allosteric effector GTP functions by stabilizing the protein conformation that binds the tetrahedral intermediate(s) formed during glutamine hydrolysis. Inhibited by the product CTP, via allosteric rather than competitive inhibition. Catalyzes the ATP-dependent amination of UTP to CTP with either L-glutamine or ammonia as the source of nitrogen. Regulates intracellular CTP levels through interactions with the four ribonucleotide triphosphates. The sequence is that of CTP synthase from Flavobacterium psychrophilum (strain ATCC 49511 / DSM 21280 / CIP 103535 / JIP02/86).